The chain runs to 673 residues: UPF0313 protein blr7973 (673 aa).

One can recognise a Radical SAM core domain in the interval 332–611 (AWDMIKFSVT…KAFLRYHDPD (280 aa)). The [4Fe-4S] cluster site is built by Cys346, Cys350, and Cys353. The segment at 632–673 (RPDQLVPAHQPPGTGKAAGTRRPVRPGGKTQRFTTKGLRVMK) is disordered.

Belongs to the UPF0313 family. Requires [4Fe-4S] cluster as cofactor.

This Bradyrhizobium diazoefficiens (strain JCM 10833 / BCRC 13528 / IAM 13628 / NBRC 14792 / USDA 110) protein is UPF0313 protein blr7973.